The primary structure comprises 187 residues: Flavin prenyltransferase UbiX (187 aa).

FMN-binding positions include 9–11, Thr-34, 88–91, and Arg-123; these read GSS and SISS. Positions 153 and 169 each coordinate dimethylallyl phosphate.

This sequence belongs to the UbiX/PAD1 family.

It catalyses the reaction dimethylallyl phosphate + FMNH2 = prenylated FMNH2 + phosphate. Flavin prenyltransferase that catalyzes the synthesis of the prenylated FMN cofactor (prenyl-FMN) for 4-hydroxy-3-polyprenylbenzoic acid decarboxylase UbiD. The prenyltransferase is metal-independent and links a dimethylallyl moiety from dimethylallyl monophosphate (DMAP) to the flavin N5 and C6 atoms of FMN. This Campylobacter jejuni subsp. jejuni serotype O:2 (strain ATCC 700819 / NCTC 11168) protein is Flavin prenyltransferase UbiX.